We begin with the raw amino-acid sequence, 121 residues long: MIISINKKKARLRRAARTRFQIKKLHLIRLVVHRTSKHIYAQIIDSKNALVLTSASTVEKEILNLVKYTGNIHASICIGKKIAERALMKGIINVSFDRSGFQYHGRVKALADAARESGLKF.

This sequence belongs to the universal ribosomal protein uL18 family. Part of the 50S ribosomal subunit; part of the 5S rRNA/L5/L18/L25 subcomplex. Contacts the 5S and 23S rRNAs.

In terms of biological role, this is one of the proteins that bind and probably mediate the attachment of the 5S RNA into the large ribosomal subunit, where it forms part of the central protuberance. This chain is Large ribosomal subunit protein uL18, found in Buchnera aphidicola subsp. Baizongia pistaciae (strain Bp).